The primary structure comprises 214 residues: Ribonuclease HII (214 aa).

The RNase H type-2 domain maps to 26 to 214 (EIVCGVDEAG…PVREAFDLIR (189 aa)). The a divalent metal cation site is built by D32, E33, and D124.

The protein belongs to the RNase HII family. Mn(2+) is required as a cofactor. It depends on Mg(2+) as a cofactor.

Its subcellular location is the cytoplasm. The catalysed reaction is Endonucleolytic cleavage to 5'-phosphomonoester.. Functionally, endonuclease that specifically degrades the RNA of RNA-DNA hybrids. The protein is Ribonuclease HII of Burkholderia mallei (strain NCTC 10247).